Here is a 343-residue protein sequence, read N- to C-terminus: Cyclin-Y-like protein 1 (343 aa).

A disordered region spans residues 1 to 48 (MGNTVTCCVSPDASPKAGRDRAVTERGEPYQAQVELQETDPGPHLQHI). A compositionally biased stretch (basic and acidic residues) spans 17–28 (AGRDRAVTERGE). A Cyclin N-terminal domain is found at 145 to 267 (EIFDEKLHPL…FLELLQFNIN (123 aa)).

Belongs to the cyclin family. Cyclin Y subfamily.

It localises to the cell membrane. Functionally, key regulator of Wnt signaling implicated in various biological processes, such as embryonic neurogenesis. The chain is Cyclin-Y-like protein 1 (ccnyl1) from Xenopus tropicalis (Western clawed frog).